The following is a 536-amino-acid chain: Ribulokinase (536 aa).

It belongs to the ribulokinase family.

The catalysed reaction is D-ribulose + ATP = D-ribulose 5-phosphate + ADP + H(+). The enzyme catalyses L-ribulose + ATP = L-ribulose 5-phosphate + ADP + H(+). Its pathway is carbohydrate degradation; L-arabinose degradation via L-ribulose; D-xylulose 5-phosphate from L-arabinose (bacterial route): step 2/3. This Staphylococcus epidermidis (strain ATCC 35984 / DSM 28319 / BCRC 17069 / CCUG 31568 / BM 3577 / RP62A) protein is Ribulokinase.